The chain runs to 86 residues: Sugar transporter SemiSWEET (86 aa).

The next 3 membrane-spanning stretches (helical) occupy residues 3–23 (PFLI…AYAP), 37–57 (ISLG…IYGL), and 61–81 (DAPL…ILVM). The 58-residue stretch at 6-63 (IKLIGFAAATCTTVAYAPQFIKVLKTRSARDISLGMFLVMVLGLALWLIYGLLSGDAP) folds into the PQ-loop domain.

As to quaternary structure, homodimer. Homooligomer.

It localises to the cell membrane. Mediates sucrose transmembrane transport down a concentration gradient. This chain is Sugar transporter SemiSWEET, found in Bradyrhizobium diazoefficiens (strain JCM 10833 / BCRC 13528 / IAM 13628 / NBRC 14792 / USDA 110).